A 551-amino-acid polypeptide reads, in one-letter code: Xylulose kinase (551 aa).

Residues His114, Arg185, Asp295, and Asn296 each contribute to the substrate site. ATP is bound by residues Trp370, 456 to 457 (GA), and Asn460.

Belongs to the FGGY kinase family. As to quaternary structure, monomer.

The enzyme catalyses D-xylulose + ATP = D-xylulose 5-phosphate + ADP + H(+). Its function is as follows. Phosphorylates D-xylulose to produce D-xylulose 5-phosphate, a molecule that may play an important role in the regulation of glucose metabolism and lipogenesis. The chain is Xylulose kinase (Xylb) from Mus musculus (Mouse).